The primary structure comprises 365 residues: Methylthioribose-1-phosphate isomerase (365 aa).

Substrate-binding positions include 53–55, Arg-90, and Gln-201; that span reads RGA. The Proton donor role is filled by Asp-242. Residue 252–253 coordinates substrate; that stretch reads NK.

Belongs to the eIF-2B alpha/beta/delta subunits family. MtnA subfamily.

The catalysed reaction is 5-(methylsulfanyl)-alpha-D-ribose 1-phosphate = 5-(methylsulfanyl)-D-ribulose 1-phosphate. Its pathway is amino-acid biosynthesis; L-methionine biosynthesis via salvage pathway; L-methionine from S-methyl-5-thio-alpha-D-ribose 1-phosphate: step 1/6. Its function is as follows. Catalyzes the interconversion of methylthioribose-1-phosphate (MTR-1-P) into methylthioribulose-1-phosphate (MTRu-1-P). This chain is Methylthioribose-1-phosphate isomerase, found in Methylorubrum extorquens (strain CM4 / NCIMB 13688) (Methylobacterium extorquens).